The chain runs to 392 residues: Heat-inducible transcription repressor HrcA (392 aa).

The protein belongs to the HrcA family.

Negative regulator of class I heat shock genes (grpE-dnaK-dnaJ and groELS operons). Prevents heat-shock induction of these operons. The chain is Heat-inducible transcription repressor HrcA from Chlamydia muridarum (strain MoPn / Nigg).